Here is a 362-residue protein sequence, read N- to C-terminus: Peptide chain release factor 1 (362 aa).

Glutamine 238 bears the N5-methylglutamine mark.

This sequence belongs to the prokaryotic/mitochondrial release factor family. Post-translationally, methylated by PrmC. Methylation increases the termination efficiency of RF1.

The protein resides in the cytoplasm. In terms of biological role, peptide chain release factor 1 directs the termination of translation in response to the peptide chain termination codons UAG and UAA. The chain is Peptide chain release factor 1 from Psychrobacter cryohalolentis (strain ATCC BAA-1226 / DSM 17306 / VKM B-2378 / K5).